We begin with the raw amino-acid sequence, 314 residues long: Prohormone-3 (314 aa).

The N-terminal stretch at 1 to 19 (MGRVLLSASSLLLHIQVFT) is a signal peptide. Residues 90-112 (YTCVALTVVALVSTMHFGVEAWG) traverse the membrane as a helical segment.

It is found in the membrane. The polypeptide is Prohormone-3 (Apis mellifera (Honeybee)).